The sequence spans 185 residues: Ribosome-recycling factor (185 aa).

The protein belongs to the RRF family.

Its subcellular location is the cytoplasm. Its function is as follows. Responsible for the release of ribosomes from messenger RNA at the termination of protein biosynthesis. May increase the efficiency of translation by recycling ribosomes from one round of translation to another. This is Ribosome-recycling factor from Thioalkalivibrio sulfidiphilus (strain HL-EbGR7).